We begin with the raw amino-acid sequence, 253 residues long: Trypsin delta (253 aa).

The first 22 residues, 1–22 (MLKFVILLSAVACALGGTVPEG), serve as a signal peptide directing secretion. The propeptide at 23–30 (LLPQLDGR) is activation peptide. Residues 31–253 (IVGGSATTIS…ALRSWVISNA (223 aa)) enclose the Peptidase S1 domain. C56 and C72 are disulfide-bonded. Active-site charge relay system residues include H71 and D116. 2 disulfide bridges follow: C180-C197 and C206-C230. Residue S210 is the Charge relay system of the active site.

Belongs to the peptidase S1 family.

The protein localises to the secreted. It localises to the extracellular space. It catalyses the reaction Preferential cleavage: Arg-|-Xaa, Lys-|-Xaa.. The polypeptide is Trypsin delta (Drosophila melanogaster (Fruit fly)).